We begin with the raw amino-acid sequence, 344 residues long: MAVSVSAPVLSLCYNQSGELSRSLGYRLPKKVGFSSGRRSVSYIGFGAEKVGRFRVRVPICRAVPPLLFKDLDADDFRHPFDKQNTLLLRAIPGLNEFGKALLGSMTEQIMLLENIGTSVLVSKNQLSDLHGLLVEAAEILNIEAPDLYVRQSPVPNAYTLAISGKKPFIVVHTSLIELLTSAELQAVLAHELGHLKCDHGVWLTFANILTLGAYTVPAFGQMIARTLEEQLLRWLRSAELTCDRAALLVAQDPKVVVSVLMKLAGGCPSIADQLNVDAFLEQARSYDKASSSPLGWYIRNAQTSQLSHPLPVLRAREIDEWSRSLEYKSLLKRANRKSTVQKV.

A chloroplast-targeting transit peptide spans M1–G47. Helical transmembrane passes span L102–V122 and F169–L189. H191 contributes to the Zn(2+) binding site. E192 is an active-site residue. H195 provides a ligand contact to Zn(2+). A helical membrane pass occupies residues G201–G221. E240 contacts Zn(2+). Residues V256 to A272 form a helical membrane-spanning segment.

The protein belongs to the peptidase M48 family. M48D subfamily. In terms of assembly, interacts with plastoglobule (PG) core proteins ABC1K3, PES1 and CCD4. The cofactor is Zn(2+). As to expression, mostly expressed in flowers (e.g. sepals, petals and stamen), seeds, leaves and cotyledons.

The protein resides in the plastid. The protein localises to the chloroplast. It is found in the plastoglobule. Its subcellular location is the chloroplast membrane. Its function is as follows. Metalloendopeptidase with a Zn-dependent proteolytic activity and substrate cleavage upstream of hydrophobic residues. Positive regulator of senescence, probably by degrading CCD4, thus participating in the controlled removal of carotenoids from the thylakoid membrane during the senescence process. The sequence is that of Plastoglobule-localized metallopeptidase 48, chloroplastic from Arabidopsis thaliana (Mouse-ear cress).